Consider the following 213-residue polypeptide: Orotate phosphoribosyltransferase (213 aa).

A 5-phospho-alpha-D-ribose 1-diphosphate-binding site is contributed by K26. Orotate is bound at residue F34–F35. Residues Y72–K73, R99, K100, K103, H105, and D124–A132 each bind 5-phospho-alpha-D-ribose 1-diphosphate. T128 and R156 together coordinate orotate.

The protein belongs to the purine/pyrimidine phosphoribosyltransferase family. PyrE subfamily. In terms of assembly, homodimer. The cofactor is Mg(2+).

It catalyses the reaction orotidine 5'-phosphate + diphosphate = orotate + 5-phospho-alpha-D-ribose 1-diphosphate. The protein operates within pyrimidine metabolism; UMP biosynthesis via de novo pathway; UMP from orotate: step 1/2. Catalyzes the transfer of a ribosyl phosphate group from 5-phosphoribose 1-diphosphate to orotate, leading to the formation of orotidine monophosphate (OMP). In Klebsiella pneumoniae subsp. pneumoniae (strain ATCC 700721 / MGH 78578), this protein is Orotate phosphoribosyltransferase.